The chain runs to 404 residues: 8-amino-7-oxononanoate synthase (404 aa).

Arg-20 contacts substrate. Residue 116–117 participates in pyridoxal 5'-phosphate binding; it reads GY. Residue His-141 coordinates substrate. Pyridoxal 5'-phosphate contacts are provided by Ser-187, His-215, and Thr-243. The residue at position 246 (Lys-246) is an N6-(pyridoxal phosphate)lysine. Thr-366 provides a ligand contact to substrate.

The protein belongs to the class-II pyridoxal-phosphate-dependent aminotransferase family. BioF subfamily. As to quaternary structure, homodimer. It depends on pyridoxal 5'-phosphate as a cofactor.

It catalyses the reaction 6-carboxyhexanoyl-[ACP] + L-alanine + H(+) = (8S)-8-amino-7-oxononanoate + holo-[ACP] + CO2. The protein operates within cofactor biosynthesis; biotin biosynthesis. Functionally, catalyzes the decarboxylative condensation of pimeloyl-[acyl-carrier protein] and L-alanine to produce 8-amino-7-oxononanoate (AON), [acyl-carrier protein], and carbon dioxide. In Cupriavidus taiwanensis (strain DSM 17343 / BCRC 17206 / CCUG 44338 / CIP 107171 / LMG 19424 / R1) (Ralstonia taiwanensis (strain LMG 19424)), this protein is 8-amino-7-oxononanoate synthase.